The sequence spans 399 residues: Phosphopentomutase (399 aa).

Residues D10, D296, H301, D337, H338, and H349 each coordinate Mn(2+).

The protein belongs to the phosphopentomutase family. Requires Mn(2+) as cofactor.

The protein resides in the cytoplasm. The enzyme catalyses 2-deoxy-alpha-D-ribose 1-phosphate = 2-deoxy-D-ribose 5-phosphate. The catalysed reaction is alpha-D-ribose 1-phosphate = D-ribose 5-phosphate. It participates in carbohydrate degradation; 2-deoxy-D-ribose 1-phosphate degradation; D-glyceraldehyde 3-phosphate and acetaldehyde from 2-deoxy-alpha-D-ribose 1-phosphate: step 1/2. In terms of biological role, isomerase that catalyzes the conversion of deoxy-ribose 1-phosphate (dRib-1-P) and ribose 1-phosphate (Rib-1-P) to deoxy-ribose 5-phosphate (dRib-5-P) and ribose 5-phosphate (Rib-5-P), respectively. The sequence is that of Phosphopentomutase from Idiomarina loihiensis (strain ATCC BAA-735 / DSM 15497 / L2-TR).